A 563-amino-acid polypeptide reads, in one-letter code: BOS complex subunit NCLN (563 aa).

Positions methionine 1–alanine 42 are cleaved as a signal peptide. Over alanine 43–alanine 522 the chain is Lumenal. N-linked (GlcNAc...) asparagine glycosylation is found at asparagine 241 and asparagine 428. A helical membrane pass occupies residues valine 523 to valine 543. Residues glutamine 544 to glutamine 563 lie on the Cytoplasmic side of the membrane.

Belongs to the nicastrin family. As to quaternary structure, component of the back of Sec61 (BOS) complex, composed of NCLN/Nicalin, NOMO (NOMO1, NOMO2 or NOMO3) and TMEM147. The BOS complex is part of the multi-pass translocon (MPT) complex, composed of three subcomplexes, the GEL complex (composed of RAB5IF/OPTI and TMCO1), the BOS complex (composed of NCLN/Nicalin, NOMO and TMEM147) and the PAT complex (composed of WDR83OS/Asterix and CCDC47). The MPT complex associates with the SEC61 complex. Highly expressed in pancreas and skeletal muscle and, at lower levels, in heart.

Its subcellular location is the endoplasmic reticulum membrane. Functionally, component of the multi-pass translocon (MPT) complex that mediates insertion of multi-pass membrane proteins into the lipid bilayer of membranes. The MPT complex takes over after the SEC61 complex: following membrane insertion of the first few transmembrane segments of proteins by the SEC61 complex, the MPT complex occludes the lateral gate of the SEC61 complex to promote insertion of subsequent transmembrane regions. May antagonize Nodal signaling and subsequent organization of axial structures during mesodermal patterning, via its interaction with NOMO. The chain is BOS complex subunit NCLN from Homo sapiens (Human).